We begin with the raw amino-acid sequence, 304 residues long: E3 ubiquitin-protein ligase CHIP (304 aa).

The segment covering 1–10 (MKGKEEKEGG) has biased composition (basic and acidic residues). The disordered stretch occupies residues 1–30 (MKGKEEKEGGARLGTGGGGSPDKSPSAQEL). Residue Lys2 forms a Glycyl lysine isopeptide (Lys-Gly) (interchain with G-Cter in ubiquitin) linkage. The segment covering 11 to 20 (ARLGTGGGGS) has biased composition (gly residues). A Phosphoserine modification is found at Ser20. A Glycyl lysine isopeptide (Lys-Gly) (interchain with G-Cter in ubiquitin) cross-link involves residue Lys23. A phosphoserine mark is found at Ser24 and Ser26. TPR repeat units lie at residues 27–60 (AQEL…NPLV), 61–94 (AVYY…DGQS), and 96–128 (KAHF…AKEQ). Residues 102–201 (GQCQLEMESY…GHIRAQQACI (100 aa)) form a required for interaction with MAPK7 region. Residues 143-197 (AKKKRWNSIEERRIHQESELHSYLTRLIAAERERELEECQRNHEGDEDDGHIRAQ) form a required for interaction with and ubiquitination of MYOCD region. The segment at 144 to 198 (KKKRWNSIEERRIHQESELHSYLTRLIAAERERELEECQRNHEGDEDDGHIRAQQ) is required for interaction with FOXO1. A required for ubiquitination of FOXO1 region spans residues 144–304 (KKKRWNSIEE…ISENGWVEDY (161 aa)). Ser150 carries the post-translational modification Phosphoserine. Glycyl lysine isopeptide (Lys-Gly) (interchain with G-Cter in ubiquitin) cross-links involve residues Lys222 and Lys256. In terms of domain architecture, U-box spans 227 to 301 (DIPDYLCGKI…DAFISENGWV (75 aa)). Ser274 is modified (phosphoserine).

In terms of assembly, homodimer. Interacts with BAG2, and with the E2 ubiquitin conjugating enzymes UBE2D1, UBE2D2 and UBE2D3. Detected in a ternary complex containing STUB1, HSPA1A and HSPBP1. Part of a complex composed of STUB1/CHIP, VCP/p97, CHRNA3, and UBXN2A that modulates the ubiquitination and endoplasmic reticulum-associated degradation (ERAD) of CHRNA3. Within the complex UBXN2A acts as a scaffold protein required for the interaction of CHRNA3 with VCP/p97, this interaction also inhibits CHRNA3 ubiquitination by STUB1/CHIP and subsequently ERAD. Interacts with MKKS. Interacts with DNAAF4. Interacts (via the U-box domain) with the UBE2V2-UBE2N heterodimer; the complex has a specific 'Lys-63'-linked polyubiquitination activity. Interacts (when monoubiquitinated) with ATXN3. Interacts with UBE2W. Interacts with DNAJB6. Interacts with FLCN and HSP90AA1. Interacts with HSP90. Interacts with UBE2N and UBE2V1. Interacts (via TPR repeats) with HSPA8 (via C-terminus). Interacts (via TPR repeats) with HSPA1A (via C-terminus). Interacts with the non-acetylated form of HSPA1A and HSPA1B. Interacts with SMAD3 and HSP90AB1. Interacts with UBE4B. Interacts with PRMT5. Interacts with MYOCD (via C-terminus). Interacts with FOXO1 (when phosphorylated on 'Ser-250'). Interacts with MAPK7/ERK5; the interaction is enhanced in the presence of IGF1 or MAP2K5 and promotes STUB1/CHIP E3 ligase activity. Interacts with and ubiquitinates ESR1; the interaction is promoted in the absence of estradiol (17-beta-estradiol/E2). Interacts with ESR2. Interacts with and ubiquitinates NFATC3; HSPA1A/HSP70 is required as a co-chaperone. In macrophages, interacts with PAQR3; the interaction promotes PPARG poylubiquitination and STUB1-mediated degradation. Component of the chaperone-assisted selective autophagy (CASA) complex consisting of BAG3, HSPA8/HSC70, HSPB8 and STUB1/CHIP. Post-translationally, auto-ubiquitinated; mediated by UBE2D1 and UBE2D2 and enhanced in the presence of MAP2K5. Monoubiquitinated at Lys-2 following cell stress by UBE2W, promoting the interaction with ATXN3. In terms of tissue distribution, expressed in the adventitia layer of the carotid artery (at protein level). Expressed in the CA1 region of the hippocampus (at protein level). Expressed in the uterus (at protein level).

Its subcellular location is the cytoplasm. It localises to the nucleus. It is found in the mitochondrion. The enzyme catalyses S-ubiquitinyl-[E2 ubiquitin-conjugating enzyme]-L-cysteine + [acceptor protein]-L-lysine = [E2 ubiquitin-conjugating enzyme]-L-cysteine + N(6)-ubiquitinyl-[acceptor protein]-L-lysine.. The protein operates within protein modification; protein ubiquitination. Its function is as follows. E3 ubiquitin-protein ligase which targets misfolded chaperone substrates towards proteasomal degradation. Plays a role in the maintenance of mitochondrial morphology and promotes mitophagic removal of dysfunctional mitochondria; thereby acts as a protector against apoptosis in response to cellular stress. Negatively regulates vascular smooth muscle contraction, via degradation of the transcriptional activator MYOCD and subsequent loss of transcription of genes involved in vascular smooth muscle contraction. Promotes survival and proliferation of cardiac smooth muscle cells via ubiquitination and degradation of FOXO1, resulting in subsequent repression of FOXO1-mediated transcription of pro-apoptotic genes. Ubiquitinates ICER-type isoforms of CREM and targets them for proteasomal degradation, thereby acts as a positive effector of MAPK/ERK-mediated inhibition of apoptosis in cardiomyocytes. Inhibits lipopolysaccharide-induced apoptosis and hypertrophy in cardiomyocytes, via ubiquitination and subsequent proteasomal degradation of NFATC3. Collaborates with ATXN3 in the degradation of misfolded chaperone substrates: ATXN3 restricting the length of ubiquitin chain attached to STUB1/CHIP substrates and preventing further chain extension. Ubiquitinates NOS1 in concert with Hsp70 and Hsp40. Modulates the activity of several chaperone complexes, including Hsp70, Hsc70 and Hsp90. Ubiquitinates CHRNA3 targeting it for endoplasmic reticulum-associated degradation in cortical neurons, as part of the STUB1-VCP-UBXN2A complex. Ubiquitinates and promotes ESR1 proteasomal degradation in response to age-related circulating estradiol (17-beta-estradiol/E2) decline, thereby promotes neuronal apoptosis in response to ischemic reperfusion injury. Mediates transfer of non-canonical short ubiquitin chains to HSPA8 that have no effect on HSPA8 degradation. Mediates polyubiquitination of DNA polymerase beta (POLB) at 'Lys-41', 'Lys-61' and 'Lys-81', thereby playing a role in base-excision repair: catalyzes polyubiquitination by amplifying the HUWE1/ARF-BP1-dependent monoubiquitination and leading to POLB-degradation by the proteasome. Mediates polyubiquitination of CYP3A4. Ubiquitinates EPHA2 and may regulate the receptor stability and activity through proteasomal degradation. Acts as a co-chaperone for HSPA1A and HSPA1B chaperone proteins and promotes ubiquitin-mediated protein degradation. Negatively regulates the suppressive function of regulatory T-cells (Treg) during inflammation by mediating the ubiquitination and degradation of FOXP3 in a HSPA1A/B-dependent manner. Catalyzes monoubiquitination of SIRT6, preventing its degradation by the proteasome. Likely mediates polyubiquitination and down-regulates plasma membrane expression of PD-L1/CD274, an immune inhibitory ligand critical for immune tolerance to self and antitumor immunity. Negatively regulates TGF-beta signaling by modulating the basal level of SMAD3 via ubiquitin-mediated degradation. Plays a role in the degradation of TP53. Mediates ubiquitination of RIPK3 leading to its subsequent proteasome-dependent degradation. May regulate myosin assembly in striated muscles together with UBE4B and VCP/p97 by targeting myosin chaperone UNC45B for proteasomal degradation. Ubiquitinates PPARG in macrophages playing a role in M2 macrophages polarization and angiogenesis. The polypeptide is E3 ubiquitin-protein ligase CHIP (Rattus norvegicus (Rat)).